The chain runs to 101 residues: NADH-quinone oxidoreductase subunit K (101 aa).

3 helical membrane-spanning segments follow: residues 4 to 24, 29 to 49, and 61 to 81; these read LAHY…GIFL, IIII…NFVA, and IFVF…LAIL.

The protein belongs to the complex I subunit 4L family. In terms of assembly, NDH-1 is composed of 14 different subunits. Subunits NuoA, H, J, K, L, M, N constitute the membrane sector of the complex.

The protein resides in the cell inner membrane. The catalysed reaction is a quinone + NADH + 5 H(+)(in) = a quinol + NAD(+) + 4 H(+)(out). NDH-1 shuttles electrons from NADH, via FMN and iron-sulfur (Fe-S) centers, to quinones in the respiratory chain. The immediate electron acceptor for the enzyme in this species is believed to be ubiquinone. Couples the redox reaction to proton translocation (for every two electrons transferred, four hydrogen ions are translocated across the cytoplasmic membrane), and thus conserves the redox energy in a proton gradient. This is NADH-quinone oxidoreductase subunit K from Burkholderia ambifaria (strain MC40-6).